Reading from the N-terminus, the 392-residue chain is Protein PrgH (392 aa).

A helical membrane pass occupies residues 142-162 (IVAALAGFFILGIGTVGTLWI).

The protein resides in the cell membrane. Functionally, required for invasion of epithelial cells. This chain is Protein PrgH (prgH), found in Salmonella typhimurium (strain LT2 / SGSC1412 / ATCC 700720).